The chain runs to 540 residues: Suppressor of tumorigenicity 7 protein-like (540 aa).

4 helical membrane-spanning segments follow: residues 24–44 (WSWT…VYVL), 68–88 (FYVA…IFEW), 475–495 (LPFF…LAML), and 502–522 (LMGV…GFFA).

The protein belongs to the ST7 family.

It localises to the membrane. The chain is Suppressor of tumorigenicity 7 protein-like (st7l) from Danio rerio (Zebrafish).